The primary structure comprises 837 residues: Ubiquitin carboxyl-terminal hydrolase A (837 aa).

A UBP-type; degenerate zinc finger spans residues 166 to 277 (PSAFAESIIQ…QHLTHWGLNP (112 aa)). Residues 319-835 (TGIENLGNSC…LGYIYFYKRQ (517 aa)) enclose the USP domain. The active-site Nucleophile is the C328. Positions 628–669 (SFNQEVLDTLLSMDFPLVRCKKALLATGGKDAELAMNWIFEH) constitute a UBA 1 domain. The tract at residues 676–695 (DIEQTPVNNNNNNNNSSNSN) is disordered. The segment covering 683–695 (NNNNNNNNSSNSN) has biased composition (low complexity). In terms of domain architecture, UBA 2 spans 700 to 740 (VFNSQDVDNIIGMGFTDSQAKLALKNTKGNLERAADWLFSH). H797 serves as the catalytic Proton acceptor.

Belongs to the peptidase C19 family.

The enzyme catalyses Thiol-dependent hydrolysis of ester, thioester, amide, peptide and isopeptide bonds formed by the C-terminal Gly of ubiquitin (a 76-residue protein attached to proteins as an intracellular targeting signal).. Functionally, required for development but not growth. The chain is Ubiquitin carboxyl-terminal hydrolase A (ubpA) from Dictyostelium discoideum (Social amoeba).